The primary structure comprises 1299 residues: MAP3K epsilon protein kinase 1 (1299 aa).

Residues 20-274 (YMLGDEIGKG…AKTLLSHPWI (255 aa)) form the Protein kinase domain. HEAT repeat units follow at residues 25-62 (EIGK…EDLN) and 86-125 (LKTK…TVYI). ATP-binding positions include 26–34 (IGKGAYGRV) and Lys-49. Catalysis depends on Asp-144, which acts as the Proton acceptor. One copy of the HEAT 3 repeat lies at 218–256 (PYYDLQPMPALFRIVQDDSPPIPDSLSPDITDFLRQCFK). Disordered stretches follow at residues 291 to 458 (IRYM…GNEL) and 483 to 509 (GKLN…DGGK). Over residues 374 to 385 (SSLQSSTCSISS) the composition is skewed to low complexity. Composition is skewed to polar residues over residues 415–432 (ATKQ…QRSH) and 488–501 (ASAS…NQGD). 16 HEAT repeats span residues 532–570 (SNDG…LLPL), 611–649 (VFVT…DNID), 653–694 (NACL…SSSL), 698–736 (MFIA…VFKL), 743–780 (NDFC…SGQL), 781–820 (DQHE…PDGD), 868–900 (QPEQ…HIAG), 901–939 (LEKH…AASA), 955–994 (SDTS…ADTT), 998–1036 (YMCS…DPNC), 1043–1081 (ADAI…INKR), 1085–1122 (QAAE…ASRN), 1125–1164 (EQLR…NDNR), 1186–1210 (CPER…RINT), 1211–1249 (TLAV…HHPR), and 1279–1299 (QVLV…NTVL). A disordered region spans residues 795 to 852 (VLKTRPGGGEEPSNSQRSDLYQPDGDRPRSSSAALDATEDVKQHHRISISSNRTSTDK).

It belongs to the protein kinase superfamily. Ser/Thr protein kinase family. Post-translationally, autophosphorylated. Expressed in both the sporophytic and the gametophytic tissues, especially in dividing cells.

Its subcellular location is the cytoplasm. It localises to the cytoskeleton. The protein localises to the microtubule organizing center. The protein resides in the nucleus. It is found in the nucleolus. Its subcellular location is the cell membrane. It catalyses the reaction L-seryl-[protein] + ATP = O-phospho-L-seryl-[protein] + ADP + H(+). The enzyme catalyses L-threonyl-[protein] + ATP = O-phospho-L-threonyl-[protein] + ADP + H(+). Serine/threonine-protein kinase involved in the spatial and temporal control system organizing cortical activities in mitotic and postmitotic cells. Required for the normal functioning of the plasma membrane in developing pollen. Involved in the regulation of cell expansion and embryo development. This is MAP3K epsilon protein kinase 1 from Brassica napus (Rape).